A 143-amino-acid chain; its full sequence is MNWAAAVCWALLLAATFLCDGSAAKGGRGGARGSARGGRGAARVRVRPAPRYAGSSMRVAAGAAAGAAAGAAAGLAAGSSWRRAAGPAELGPEDAEDGAPGSNGTGRGVYSYWAWTSGTGPTGHRHLCPLLGGALGALRLLRP.

The signal sequence occupies residues 1-24; sequence MNWAAAVCWALLLAATFLCDGSAA. N-linked (GlcNAc...) asparagine glycosylation occurs at N103. S117 is lipidated: GPI-anchor amidated serine. Positions 118–143 are cleaved as a propeptide — removed in mature form; the sequence is GTGPTGHRHLCPLLGGALGALRLLRP.

The protein belongs to the SPRN family. N-glycosylated. As to expression, mainly expressed in brain.

The protein resides in the cell membrane. Functionally, prion-like protein that has PrP(C)-like neuroprotective activity. May act as a modulator for the biological actions of normal and abnormal PrP. This chain is Shadow of prion protein (SPRN), found in Bos taurus (Bovine).